Here is a 918-residue protein sequence, read N- to C-terminus: Protein translocase subunit SecA (918 aa).

ATP is bound by residues Gln-87, Gly-105 to Thr-109, and Asp-500. A disordered region spans residues Ala-876–Arg-918. Zn(2+)-binding residues include Cys-902, Cys-904, Cys-913, and His-914. Basic residues predominate over residues Lys-908–Arg-918.

This sequence belongs to the SecA family. In terms of assembly, monomer and homodimer. Part of the essential Sec protein translocation apparatus which comprises SecA, SecYEG and auxiliary proteins SecDF-YajC and YidC. The cofactor is Zn(2+).

It localises to the cell inner membrane. The protein resides in the cytoplasm. It catalyses the reaction ATP + H2O + cellular proteinSide 1 = ADP + phosphate + cellular proteinSide 2.. Functionally, part of the Sec protein translocase complex. Interacts with the SecYEG preprotein conducting channel. Has a central role in coupling the hydrolysis of ATP to the transfer of proteins into and across the cell membrane, serving both as a receptor for the preprotein-SecB complex and as an ATP-driven molecular motor driving the stepwise translocation of polypeptide chains across the membrane. The chain is Protein translocase subunit SecA from Rhodospirillum centenum (strain ATCC 51521 / SW).